The sequence spans 498 residues: MAEDSESAASQQSLELDDQDTCGIDGDNEEETEHAKGSPGGYLGAKKKKKKQKRKKEKPNSGGTKSDSASDSQEIKIQQPSKNPSVPMQKLQDIQRAMELLSACQGPARNIDEAAKHRYQFWDTQPVPKLDEVITSHGAIEPDKDNVRQEPYSLPQGFMWDTLDLSDAEVLKELYTLLNENYVEDDDNMFRFDYSPEFLLWALRPPGWLLQWHCGVRVSSNKKLVGFISAIPANIRIYDSVKKMVEINFLCVHKKLRSKRVAPVLIREITRRVNLEGIFQAVYTAGVVLPKPIATCRYWHRSLNPRKLVEVKFSHLSRNMTLQRTMKLYRLPDVTKTSGLRPMEPKDIKSVRELINTYLKQFHLAPVMDEEEVAHWFLPREHIIDTFVVESPNGKLTDFLSFYTLPSTVMHHPAHKSLKAAYSFYNIHTETPLLDLMSDALILAKSKGFDVFNALDLMENKTFLEKLKFGIGDGNLQYYLYNWRCPGTDSEKVGLVLQ.

Positions 1–88 are disordered; that stretch reads MAEDSESAAS…QPSKNPSVPM (88 aa). Residues 15-32 are compositionally biased toward acidic residues; it reads ELDDQDTCGIDGDNEEET. Serine 38 bears the Phosphoserine mark. Residues 45-57 are compositionally biased toward basic residues; it reads AKKKKKKQKRKKE. The segment covering 61-86 has biased composition (polar residues); it reads SGGTKSDSASDSQEIKIQQPSKNPSV. 8 residues coordinate tetradecanoyl-CoA: histidine 117, tryptophan 122, leucine 250, valine 252, serine 258, arginine 260, valine 261, and alanine 262.

Belongs to the NMT family.

The protein resides in the cytoplasm. It localises to the membrane. It catalyses the reaction N-terminal glycyl-[protein] + tetradecanoyl-CoA = N-tetradecanoylglycyl-[protein] + CoA + H(+). It carries out the reaction N-terminal glycyl-L-lysyl-[protein] + tetradecanoyl-CoA = N-terminal glycyl-(N(6)-tetradecanoyl)-L-lysyl-[protein] + CoA + H(+). Adds a myristoyl group to the N-terminal glycine residue of certain cellular and viral proteins. Also able to mediate N-terminal lysine myristoylation of proteins: catalyzes myristoylation of ARF6 on both 'Gly-2' and 'Lys-3'. Lysine myristoylation is required to maintain ARF6 on membranes during the GTPase cycle. The polypeptide is Glycylpeptide N-tetradecanoyltransferase 2 (Homo sapiens (Human)).